The chain runs to 198 residues: Nucleoid occlusion factor SlmA (198 aa).

Residues 11–71 form the HTH tetR-type domain; it reads PNRKHQILES…GLIDFIEESI (61 aa). A DNA-binding region (H-T-H motif) is located at residues 34-53; sequence TTAKLAAEVGFSEAALYRHF.

This sequence belongs to the nucleoid occlusion factor SlmA family. Homodimer. Interacts with FtsZ.

The protein resides in the cytoplasm. It is found in the nucleoid. Required for nucleoid occlusion (NO) phenomenon, which prevents Z-ring formation and cell division over the nucleoid. Acts as a DNA-associated cell division inhibitor that binds simultaneously chromosomal DNA and FtsZ, and disrupts the assembly of FtsZ polymers. SlmA-DNA-binding sequences (SBS) are dispersed on non-Ter regions of the chromosome, preventing FtsZ polymerization at these regions. The sequence is that of Nucleoid occlusion factor SlmA from Colwellia psychrerythraea (strain 34H / ATCC BAA-681) (Vibrio psychroerythus).